The sequence spans 553 residues: Serine protease 53 (553 aa).

The signal sequence occupies residues 1 to 23; the sequence is MKWCWGPVLLIAGATVLMEGLQA. Peptidase S1 domains follow at residues 24–273 and 294–526; these read AQRA…ARVQ and VACG…SLDW. The interval 27-46 is disordered; it reads ACGQRGPGPPKPQEGNTVPG. Cysteine 62 and cysteine 78 are oxidised to a cystine. Active-site charge relay system residues include histidine 77 and aspartate 128. 4 disulfides stabilise this stretch: cysteine 158–cysteine 230, cysteine 187–cysteine 209, cysteine 220–cysteine 249, and cysteine 326–cysteine 342. Residues serine 224, histidine 341, and aspartate 382 each act as charge relay system in the active site. Intrachain disulfides connect cysteine 444-cysteine 464 and cysteine 474-cysteine 502. The active-site Charge relay system is serine 478.

This sequence belongs to the peptidase S1 family. Predominantly detected in testis, liver, heart and ovary, as well as in several tumor cell lines.

It localises to the secreted. Functionally, in vitro can degrade the fibrinogen alpha chain of as well as pro-urokinase-type plasminogen activator. This is Serine protease 53 (PRSS53) from Homo sapiens (Human).